The primary structure comprises 421 residues: Forkhead box protein J1 (421 aa).

Disordered stretches follow at residues 1-32 (MAES…LDDS) and 77-110 (ADPA…PPPD). The span at 11–21 (AGPGEEAGPEG) shows a compositional bias: gly residues. The span at 90-99 (KPTSSCTSRS) shows a compositional bias: polar residues. Positions 120-210 (VKPPYSYATL…YAERLLSGAF (91 aa)) form a DNA-binding region, fork-head.

This sequence belongs to the FOXJ1 family. In terms of tissue distribution, predominantly expressed in tissues containing motile cilia.

The protein localises to the nucleus. In terms of biological role, transcription factor specifically required for the formation of motile cilia. Acts by activating transcription of genes that mediate assembly of motile cilia, such as CFAP157. Binds the DNA consensus sequences 5'-HWDTGTTTGTTTA-3' or 5'-KTTTGTTGTTKTW-3' (where H is not G, W is A or T, D is not C, and K is G or T). Activates the transcription of a variety of ciliary proteins in the developing brain and lung. The sequence is that of Forkhead box protein J1 from Mus musculus (Mouse).